Reading from the N-terminus, the 408-residue chain is MSWDQVWIDVNVATMSPSVSAPYGAITDAAVAVEKGRIAWIGLRSELPEFDVLSTPVYRGKGAWITPGLIDAHTHLVFAGNRANEFELRLQGASYEEIARSGGGIISTVKACREASEGELFELGRKRLNALAKEGVTTVEIKSGYGLETETELKLLRVARELGKHHHVDVKTTFLGAHAIPPEYKDNAETYVDLVIDEMLPAVIEENLADAADVFCENIAFSVEQTERVLTAAKDAGLDIKLHAEQLSNLGGSAMAARLGAKSVDHIEYLDETGVKALSQSGTCATLLPGAFYFLRETQMPPIELLRKHKVPMVLASDYNPGSSPLCSSLLMLNMGCTLFRLTPEEALAGMTRNAAKALGVEDNVGVLEVGMQADFCLWDITTPAQLSYSYGVGVCLEVVKSGQLVHQ.

Fe(3+) is bound by residues His-73 and His-75. Residues His-73 and His-75 each contribute to the Zn(2+) site. 4-imidazolone-5-propanoate contacts are provided by Arg-82, Tyr-145, and His-178. Tyr-145 lines the N-formimidoyl-L-glutamate pocket. Residue His-243 participates in Fe(3+) binding. Residue His-243 participates in Zn(2+) binding. Residue Gln-246 coordinates 4-imidazolone-5-propanoate. Asp-318 serves as a coordination point for Fe(3+). Asp-318 lines the Zn(2+) pocket. The N-formimidoyl-L-glutamate site is built by Asn-320 and Gly-322. Ser-323 provides a ligand contact to 4-imidazolone-5-propanoate.

This sequence belongs to the metallo-dependent hydrolases superfamily. HutI family. Requires Zn(2+) as cofactor. Fe(3+) serves as cofactor.

The protein resides in the cytoplasm. It catalyses the reaction 4-imidazolone-5-propanoate + H2O = N-formimidoyl-L-glutamate. It functions in the pathway amino-acid degradation; L-histidine degradation into L-glutamate; N-formimidoyl-L-glutamate from L-histidine: step 3/3. Its function is as follows. Catalyzes the hydrolytic cleavage of the carbon-nitrogen bond in imidazolone-5-propanoate to yield N-formimidoyl-L-glutamate. It is the third step in the universal histidine degradation pathway. The protein is Imidazolonepropionase of Shewanella sediminis (strain HAW-EB3).